The sequence spans 369 residues: MELATREKVNEVLFMNRGEGESSYAQNSSFTQQVASMAQPALENAVETLFSKDFHLQALNAADLGCAAGPNTFAVISTIKRMMEKKCRELNCQTLELQVYLNDLFGNDFNTLFKGLSSEVIGNKCEEVPCYVMGVPGSFHGRLFPRNSLHLVYSSYSVHWLTQAPKGLTSREGLALNKGKIYISKTSPPVVREAYLSQFHEDFTMFLNYRSQEMVPNGCMVLILRGRQCFDPSDMQSCFTWELLALAIAELVSQGLIDEDKLDTFNIPSYFASLEEVKDIVERDGSFTIDHIEGFDLDSVEMQENDKWVRGEKFTKVVRAFSEPIISSQFGHEIMDKLYDKFTHIVVSDLEAKLPKTTSIILVLSKIVG.

Tyr24 lines the S-adenosyl-L-homocysteine pocket. Thr31 contributes to the caffeine binding site. S-adenosyl-L-homocysteine is bound by residues Cys66, Asn71, Asp103, Leu104, Ser138, and Phe139. The caffeine site is built by Tyr156, His159, and Trp160. Asn177 contributes to the Mg(2+) binding site. Caffeine is bound at residue Arg225. Residues Asp263, Phe265, and Asn266 each contribute to the Mg(2+) site. Phe321 serves as a coordination point for caffeine.

This sequence belongs to the methyltransferase superfamily. Type-7 methyltransferase family. Requires Mg(2+) as cofactor.

The enzyme catalyses 1,7-dimethylxanthine + S-adenosyl-L-methionine = caffeine + S-adenosyl-L-homocysteine + H(+). It carries out the reaction theobromine + S-adenosyl-L-methionine = caffeine + S-adenosyl-L-homocysteine + H(+). It catalyses the reaction 7-methylxanthine + S-adenosyl-L-methionine = theobromine + S-adenosyl-L-homocysteine + H(+). It participates in alkaloid biosynthesis. Functionally, involved in the biosynthesis of caffeine in cv. Puer. Involved in the biosynthesis of theacrine in cv. Kucha, a caffeine-like xanthine alkaloid with diverse beneficial biological activities including anti-depressive, sedative, and hypnotic activities, improving learning and memory, increasing exercise activity, and preventing nonalcoholic fatty liver disease. Catalyzes the conversion of 7-methylxanthine (7mX) to theobromine and of theobromine to caffeine. Has 3-N- and 1-N-methylation activity. This is 3,7-dimethylxanthine N-methyltransferase TCS1 from Camellia sinensis var. assamica (Assam tea).